The following is a 445-amino-acid chain: FAD-dependent monooxygenase sorC (445 aa).

Residues 8–28 traverse the membrane as a helical segment; that stretch reads PFEVAIVGGGITGLALAVGLL. Asn-31 is a glycosylation site (N-linked (GlcNAc...) asparagine). Residues Glu-38 and Arg-119 each contribute to the FAD site. Arg-201 is a catalytic residue. Asp-323 and Ala-336 together coordinate FAD. A glycan (N-linked (GlcNAc...) asparagine) is linked at Asn-358.

This sequence belongs to the paxM FAD-dependent monooxygenase family. Requires FAD as cofactor.

The protein localises to the membrane. It participates in secondary metabolite biosynthesis. Functionally, FAD-dependent monooxygenase; part of the gene cluster that mediates the biosynthesis of sorbicillinoids, a diverse group of yellow secondary metabolites that restrict growth of competing pathogenic fungi but not of bacteria. Sorbicillinoids biosynthesis requires the action of two PKSs. SorA iteratively combines three acetyl units and the growing chain is modified by the ketoacyl reductase subunit, and optional by the enoyl reductase subunit in the second cycle. The polyketide is then handed over to the PKS SorB, which adds three more acetyl units, and two methyl groups. SorB releases an aldehyde, which undergoes spontaneous cyclization resulting in the formation of sorbicillin or 2',3'-dihydrosorbicillin. The monooxygenase sorC oxidizes sorbicillin and 2',3'-dihydrosorbicillin to 2',3'-dihydrosorbicillinol and sorbicillinol, respectively. The oxidoreductase sorD further converts sorbicillinol into oxosorbicillinol. Sorbicillinol is the building block for the other sorbicillinoids such as disorbicillinol, bisvertinolon, and dihydrobisvertinolone. The sequence is that of FAD-dependent monooxygenase sorC from Penicillium rubens (strain ATCC 28089 / DSM 1075 / NRRL 1951 / Wisconsin 54-1255) (Penicillium chrysogenum).